Here is a 71-residue protein sequence, read N- to C-terminus: Ranatuerin-2PLa (71 aa).

An N-terminal signal peptide occupies residues 1-22 (MFTTKKSMLLFFFLGTISLSLC). Positions 23–41 (EQERGADEDDGVEMTEEEV) are excised as a propeptide. A disulfide bridge links cysteine 66 with cysteine 71.

As to expression, expressed by the skin glands.

It is found in the secreted. In terms of biological role, may have antimicrobial activity against the Gram-negative bacterium E.coli. This Lithobates palustris (Pickerel frog) protein is Ranatuerin-2PLa.